Here is a 126-residue protein sequence, read N- to C-terminus: Histone H2B (126 aa).

Over residues 1–12 (MPEPAKSAPAPK) the composition is skewed to low complexity. The disordered stretch occupies residues 1–36 (MPEPAKSAPAPKKGSKKAVTKTQKKGDKKRKKSRKE). Residues Lys-6 and Lys-13 each carry the N6-acetyllysine modification. A compositionally biased stretch (basic residues) spans 13 to 34 (KGSKKAVTKTQKKGDKKRKKSR). Ser-15 carries the post-translational modification Phosphoserine. N6-acetyllysine occurs at positions 16 and 21. A Glycyl lysine isopeptide (Lys-Gly) (interchain with G-Cter in ubiquitin) cross-link involves residue Lys-121.

It belongs to the histone H2B family. In terms of assembly, the nucleosome is a histone octamer containing two molecules each of H2A, H2B, H3 and H4 assembled in one H3-H4 heterotetramer and two H2A-H2B heterodimers. The octamer wraps approximately 147 bp of DNA. Monoubiquitination of Lys-121 by the RNF20/40 complex gives a specific tag for epigenetic transcriptional activation and is also prerequisite for histone H3 'Lys-4' and 'Lys-79' methylation. Post-translationally, phosphorylated on Ser-15 during apoptosis; which facilitates apoptotic chromatin condensation.

The protein resides in the nucleus. It localises to the chromosome. Functionally, core component of nucleosome. Nucleosomes wrap and compact DNA into chromatin, limiting DNA accessibility to the cellular machineries which require DNA as a template. Histones thereby play a central role in transcription regulation, DNA repair, DNA replication and chromosomal stability. DNA accessibility is regulated via a complex set of post-translational modifications of histones, also called histone code, and nucleosome remodeling. The protein is Histone H2B of Cairina moschata (Muscovy duck).